Here is a 218-residue protein sequence, read N- to C-terminus: Glutathione S-transferase Mu 2 (218 aa).

The GST N-terminal domain maps to 2 to 88 (PIILGYWNIR…YIARKHNLCG (87 aa)). 7-8 (YW) is a glutathione binding site. Phosphoserine occurs at positions 27 and 44. Glutathione is bound by residues 43-46 (RSQW), Lys-50, 59-60 (NL), and 72-73 (QS). Positions 90 to 208 (TEKEKIQEDI…KSSRFLPRPV (119 aa)) constitute a GST C-terminal domain. Residue Tyr-116 participates in substrate binding.

It belongs to the GST superfamily. Mu family. In terms of assembly, homodimer.

The protein resides in the cytoplasm. The catalysed reaction is RX + glutathione = an S-substituted glutathione + a halide anion + H(+). It catalyses the reaction 11(S)-hydroxy-14(S),15(S)-epoxy-(5Z,8Z,12E)-eicosatrienoate + glutathione = (11S,15S)-dihydroxy-14(R)-S-glutathionyl-(5Z,8Z,12E)-eicosatrienoate. Functionally, conjugation of reduced glutathione to a wide number of exogenous and endogenous hydrophobic electrophiles. Participates in the formation of novel hepoxilin regioisomers. The chain is Glutathione S-transferase Mu 2 (GSTM2) from Pongo abelii (Sumatran orangutan).